The chain runs to 306 residues: MANEFINFEKISRKTWQHLHQESQPPLNENELNSIKSLNDRISIKDVTDIYLPLISLIQIYKKSQENLSFSKSIFLQKNISNRPFIIGVSGSVAVGKSTTSRLLQLLLARTFKDSSVELMTTDGFLYPNAVLSSRHMLNKKGFPESYDMERLLDFLDTIKNGQSAEIPVYSHEIYDIVPNKSQIIEVPDFLIIEGINVFQNPQNNRLYMSDFFDFSIYIDADSDYIENWYLERFATLLDLAKNDKQNYYNRFLKLGEKGALDFARDIWKDINLVNLEKYIEPTRSRAELILHKTKNHKIDEIYLKK.

91 to 98 contacts ATP; the sequence is GSVAVGKS.

It belongs to the prokaryotic pantothenate kinase family.

The protein resides in the cytoplasm. The catalysed reaction is (R)-pantothenate + ATP = (R)-4'-phosphopantothenate + ADP + H(+). It participates in cofactor biosynthesis; coenzyme A biosynthesis; CoA from (R)-pantothenate: step 1/5. The polypeptide is Pantothenate kinase (Streptococcus mutans serotype c (strain ATCC 700610 / UA159)).